A 160-amino-acid chain; its full sequence is Putative pre-16S rRNA nuclease (160 aa).

This sequence belongs to the YqgF nuclease family.

The protein resides in the cytoplasm. Could be a nuclease involved in processing of the 5'-end of pre-16S rRNA. The protein is Putative pre-16S rRNA nuclease of Rhodopseudomonas palustris (strain HaA2).